The sequence spans 208 residues: NAD(P)H dehydrogenase (quinone) (208 aa).

One can recognise a Flavodoxin-like domain in the interval 4 to 199 (VNVIFHSIHG…AMARYQGRHV (196 aa)). Residues 10–15 (SIHGHT) and 87–89 (TRY) each bind FMN. W107 is a binding site for substrate. Residues 122-128 (SSGTQHG) and H143 each bind FMN.

The protein belongs to the WrbA family. FMN serves as cofactor.

The catalysed reaction is a quinone + NADH + H(+) = a quinol + NAD(+). It carries out the reaction a quinone + NADPH + H(+) = a quinol + NADP(+). The chain is NAD(P)H dehydrogenase (quinone) from Methanosarcina barkeri (strain Fusaro / DSM 804).